The following is a 380-amino-acid chain: MAPNLRKSHPLLKMINNSLIDLPTPSNISAWWNFGSLLGICLMTQILTGLLLAMHYTADTTLAFSSVAHTCRNVQYGWLIRNLHANGASFFFICIYLHIGRGFYYGSYLYKETWNTGIILLLTLMATAFVGYVLPWGQMSFWGATVITNLFSAIPYIGQTLVEWAWGGFSVDNPTLTRFFALHFLLPFAIAGLTLIHLTFLHESGSNNPLGIVSNCDKIPFHPYFTLKDILGFALMVLPLTSLALFSPNLLGDPENFTPANPLVTPPHIKPEWYFLFAYAILRSIPNKLGGVLALAASVLVLFLSPFLHKAKQRTMTFRPLSQLLFWILVTNLFILTWVGSQPVEHPFIIIGQLASITYFTILLILFPIIGTLENKMLNF.

4 helical membrane-spanning segments follow: residues 34 to 54 (FGSLLGICLMTQILTGLLLAM), 78 to 99 (WLIRNLHANGASFFFICIYLHI), 114 to 134 (WNTGIILLLTLMATAFVGYVL), and 179 to 199 (FFALHFLLPFAIAGLTLIHLT). Heme b is bound by residues His84 and His98. Heme b is bound by residues His183 and His197. Residue His202 participates in a ubiquinone binding. 4 helical membrane passes run 227–247 (LKDILGFALMVLPLTSLALFS), 289–309 (LGGVLALAASVLVLFLSPFLH), 321–341 (LSQLLFWILVTNLFILTWVGS), and 348–368 (FIIIGQLASITYFTILLILFP).

Belongs to the cytochrome b family. The cytochrome bc1 complex contains 11 subunits: 3 respiratory subunits (MT-CYB, CYC1 and UQCRFS1), 2 core proteins (UQCRC1 and UQCRC2) and 6 low-molecular weight proteins (UQCRH/QCR6, UQCRB/QCR7, UQCRQ/QCR8, UQCR10/QCR9, UQCR11/QCR10 and a cleavage product of UQCRFS1). This cytochrome bc1 complex then forms a dimer. Heme b is required as a cofactor.

Its subcellular location is the mitochondrion inner membrane. Its function is as follows. Component of the ubiquinol-cytochrome c reductase complex (complex III or cytochrome b-c1 complex) that is part of the mitochondrial respiratory chain. The b-c1 complex mediates electron transfer from ubiquinol to cytochrome c. Contributes to the generation of a proton gradient across the mitochondrial membrane that is then used for ATP synthesis. The chain is Cytochrome b (MT-CYB) from Macronectes giganteus (Southern giant petrel).